Reading from the N-terminus, the 100-residue chain is Urease subunit gamma (100 aa).

Belongs to the urease gamma subunit family. Heterotrimer of UreA (gamma), UreB (beta) and UreC (alpha) subunits. Three heterotrimers associate to form the active enzyme.

The protein resides in the cytoplasm. The catalysed reaction is urea + 2 H2O + H(+) = hydrogencarbonate + 2 NH4(+). Its pathway is nitrogen metabolism; urea degradation; CO(2) and NH(3) from urea (urease route): step 1/1. This is Urease subunit gamma from Corynebacterium glutamicum (strain R).